Consider the following 190-residue polypeptide: Peptidyl-prolyl cis-trans isomerase A (190 aa).

Residues 1 to 23 (MSKRILAAVVTVLSLTAFSPAFA) form the signal peptide. The PPIase cyclophilin-type domain maps to 26–187 (TSTHVLLTTS…KPIVIQSAKI (162 aa)).

This sequence belongs to the cyclophilin-type PPIase family.

The protein localises to the periplasm. It carries out the reaction [protein]-peptidylproline (omega=180) = [protein]-peptidylproline (omega=0). Functionally, PPIases accelerate the folding of proteins. It catalyzes the cis-trans isomerization of proline imidic peptide bonds in oligopeptides. This Dickeya dadantii (strain 3937) (Erwinia chrysanthemi (strain 3937)) protein is Peptidyl-prolyl cis-trans isomerase A (rotA).